The primary structure comprises 187 residues: Ribosome-recycling factor (187 aa).

It belongs to the RRF family.

It localises to the cytoplasm. Its function is as follows. Responsible for the release of ribosomes from messenger RNA at the termination of protein biosynthesis. May increase the efficiency of translation by recycling ribosomes from one round of translation to another. The protein is Ribosome-recycling factor of Rhodopseudomonas palustris (strain BisB18).